The chain runs to 599 residues: MSISSLELQIQTLPDNPGVYQYYDKDGKILYVGKAKNLKKRVSSYFNKVHDTAKTNVLVKKIVTIKHIVVPTETDALLLENNLIKTLQPRYNILLRDDKTYPWICIKKEPFSRLFPTRKMVKDGSEYFGPYTSFKTVSVILDLIKELYPLRSCNFDLSQKNIENYKFKVCLEYHIGNCKGACEGLETLENYQTQINAIREILKGNFKDSMKDFKKVMTNLAQNMHFEEAQKIKEKIEILENYQSRSTIINPKITNIDVFSIVSDEAAAFINFLQISHGSIIRSHTLEIKKKLDETDQELLELAIVELRERFQLLSREIIVPFEVEVGENIKVTVPQLGDKKQILELSVRNAKFYRIEQLKQLQIVDPERHVNRIMAQMKKDLRLSVEPRHIECFDNSNIQGTNPVAACVVFKDGKPSKKDYRHFNIKTVEGPNDFASMEEVVYRRYKRLLDENQPLPNLIIIDGGKGQLSSALKIIDELDLRGKIAIIGIAKRLEELFYPGDSIPLYLDKKSETLKIIQQLRNEAHRFGITFHRDKRSKAALNSSIETIPGIGEKTMLTLIKHFKSVKRLKLAKEKEISDLIGISKAKKITDFYSKLDN.

Residues 15–93 form the GIY-YIG domain; that stretch reads DNPGVYQYYD…IKTLQPRYNI (79 aa). One can recognise a UVR domain in the interval 207 to 242; that stretch reads KDSMKDFKKVMTNLAQNMHFEEAQKIKEKIEILENY.

This sequence belongs to the UvrC family. Interacts with UvrB in an incision complex.

It is found in the cytoplasm. Its function is as follows. The UvrABC repair system catalyzes the recognition and processing of DNA lesions. UvrC both incises the 5' and 3' sides of the lesion. The N-terminal half is responsible for the 3' incision and the C-terminal half is responsible for the 5' incision. In Flavobacterium psychrophilum (strain ATCC 49511 / DSM 21280 / CIP 103535 / JIP02/86), this protein is UvrABC system protein C.